The primary structure comprises 354 residues: Histidinol-phosphate aminotransferase (354 aa).

Residue Lys210 is modified to N6-(pyridoxal phosphate)lysine.

Belongs to the class-II pyridoxal-phosphate-dependent aminotransferase family. Histidinol-phosphate aminotransferase subfamily. In terms of assembly, homodimer. The cofactor is pyridoxal 5'-phosphate.

It catalyses the reaction L-histidinol phosphate + 2-oxoglutarate = 3-(imidazol-4-yl)-2-oxopropyl phosphate + L-glutamate. Its pathway is amino-acid biosynthesis; L-histidine biosynthesis; L-histidine from 5-phospho-alpha-D-ribose 1-diphosphate: step 7/9. The chain is Histidinol-phosphate aminotransferase from Clostridium botulinum (strain 657 / Type Ba4).